The primary structure comprises 546 residues: Glucose-6-phosphate isomerase (546 aa).

Glu-353 functions as the Proton donor in the catalytic mechanism. Catalysis depends on residues His-384 and Lys-512.

This sequence belongs to the GPI family.

It is found in the cytoplasm. It catalyses the reaction alpha-D-glucose 6-phosphate = beta-D-fructose 6-phosphate. Its pathway is carbohydrate biosynthesis; gluconeogenesis. It functions in the pathway carbohydrate degradation; glycolysis; D-glyceraldehyde 3-phosphate and glycerone phosphate from D-glucose: step 2/4. Catalyzes the reversible isomerization of glucose-6-phosphate to fructose-6-phosphate. The protein is Glucose-6-phosphate isomerase of Actinobacillus pleuropneumoniae serotype 3 (strain JL03).